The following is a 100-amino-acid chain: Small ribosomal subunit protein uS14c (100 aa).

Belongs to the universal ribosomal protein uS14 family. Part of the 30S ribosomal subunit.

It is found in the plastid. It localises to the chloroplast. Its function is as follows. Binds 16S rRNA, required for the assembly of 30S particles. This is Small ribosomal subunit protein uS14c from Emiliania huxleyi (Coccolithophore).